Consider the following 242-residue polypeptide: ATP synthase subunit a (242 aa).

Helical transmembrane passes span 29–49 (SSIY…LAFY), 84–104 (FIPL…LGMT), 114–134 (IIVT…VGFV), 140–160 (FLTL…MIVI), 189–209 (VIAG…IPLM), and 210–230 (VILI…FTIL).

The protein belongs to the ATPase A chain family. F-type ATPases have 2 components, CF(1) - the catalytic core - and CF(0) - the membrane proton channel. CF(1) has five subunits: alpha(3), beta(3), gamma(1), delta(1), epsilon(1). CF(0) has three main subunits: a(1), b(2) and c(9-12). The alpha and beta chains form an alternating ring which encloses part of the gamma chain. CF(1) is attached to CF(0) by a central stalk formed by the gamma and epsilon chains, while a peripheral stalk is formed by the delta and b chains.

The protein resides in the cell inner membrane. Key component of the proton channel; it plays a direct role in the translocation of protons across the membrane. In Rickettsia felis (strain ATCC VR-1525 / URRWXCal2) (Rickettsia azadi), this protein is ATP synthase subunit a.